Reading from the N-terminus, the 292-residue chain is 4-hydroxy-tetrahydrodipicolinate synthase (292 aa).

Thr-45 contributes to the pyruvate binding site. Residue Tyr-133 is the Proton donor/acceptor of the active site. Lys-161 acts as the Schiff-base intermediate with substrate in catalysis. Ile-203 is a pyruvate binding site.

The protein belongs to the DapA family. As to quaternary structure, homotetramer; dimer of dimers.

It is found in the cytoplasm. The enzyme catalyses L-aspartate 4-semialdehyde + pyruvate = (2S,4S)-4-hydroxy-2,3,4,5-tetrahydrodipicolinate + H2O + H(+). Its pathway is amino-acid biosynthesis; L-lysine biosynthesis via DAP pathway; (S)-tetrahydrodipicolinate from L-aspartate: step 3/4. Its function is as follows. Catalyzes the condensation of (S)-aspartate-beta-semialdehyde [(S)-ASA] and pyruvate to 4-hydroxy-tetrahydrodipicolinate (HTPA). In Shigella flexneri, this protein is 4-hydroxy-tetrahydrodipicolinate synthase.